The sequence spans 428 residues: Glutamate-1-semialdehyde 2,1-aminomutase (428 aa).

Lys267 bears the N6-(pyridoxal phosphate)lysine mark.

It belongs to the class-III pyridoxal-phosphate-dependent aminotransferase family. HemL subfamily. In terms of assembly, homodimer. The cofactor is pyridoxal 5'-phosphate.

Its subcellular location is the cytoplasm. It catalyses the reaction (S)-4-amino-5-oxopentanoate = 5-aminolevulinate. It participates in porphyrin-containing compound metabolism; protoporphyrin-IX biosynthesis; 5-aminolevulinate from L-glutamyl-tRNA(Glu): step 2/2. The chain is Glutamate-1-semialdehyde 2,1-aminomutase from Persephonella marina (strain DSM 14350 / EX-H1).